The sequence spans 313 residues: Carbamate kinase 2 (313 aa).

This sequence belongs to the carbamate kinase family.

The protein localises to the cytoplasm. It carries out the reaction hydrogencarbonate + NH4(+) + ATP = carbamoyl phosphate + ADP + H2O + H(+). Its pathway is metabolic intermediate metabolism; carbamoyl phosphate degradation; CO(2) and NH(3) from carbamoyl phosphate: step 1/1. The protein is Carbamate kinase 2 (arcC2) of Staphylococcus aureus (strain Mu50 / ATCC 700699).